Consider the following 368-residue polypeptide: Phosphoserine aminotransferase (368 aa).

R44 provides a ligand contact to L-glutamate. Pyridoxal 5'-phosphate is bound by residues 78-79, W104, T157, D179, and Q202; that span reads AT. K203 bears the N6-(pyridoxal phosphate)lysine mark. 244-245 serves as a coordination point for pyridoxal 5'-phosphate; the sequence is NT.

It belongs to the class-V pyridoxal-phosphate-dependent aminotransferase family. SerC subfamily. In terms of assembly, homodimer. The cofactor is pyridoxal 5'-phosphate.

The protein resides in the cytoplasm. It catalyses the reaction O-phospho-L-serine + 2-oxoglutarate = 3-phosphooxypyruvate + L-glutamate. It carries out the reaction 4-(phosphooxy)-L-threonine + 2-oxoglutarate = (R)-3-hydroxy-2-oxo-4-phosphooxybutanoate + L-glutamate. It functions in the pathway amino-acid biosynthesis; L-serine biosynthesis; L-serine from 3-phospho-D-glycerate: step 2/3. It participates in cofactor biosynthesis; pyridoxine 5'-phosphate biosynthesis; pyridoxine 5'-phosphate from D-erythrose 4-phosphate: step 3/5. Functionally, catalyzes the reversible conversion of 3-phosphohydroxypyruvate to phosphoserine and of 3-hydroxy-2-oxo-4-phosphonooxybutanoate to phosphohydroxythreonine. This is Phosphoserine aminotransferase from Neisseria gonorrhoeae (strain ATCC 700825 / FA 1090).